A 449-amino-acid chain; its full sequence is Histidinol dehydrogenase (449 aa).

Y136, Q204, and N232 together coordinate NAD(+). 3 residues coordinate substrate: T255, Q277, and H280. Residues Q277 and H280 each contribute to the Zn(2+) site. Catalysis depends on proton acceptor residues E346 and H347. Substrate contacts are provided by H347, D380, E434, and H439. Zn(2+) is bound at residue D380. Residue H439 coordinates Zn(2+).

Belongs to the histidinol dehydrogenase family. Zn(2+) serves as cofactor.

It catalyses the reaction L-histidinol + 2 NAD(+) + H2O = L-histidine + 2 NADH + 3 H(+). The protein operates within amino-acid biosynthesis; L-histidine biosynthesis; L-histidine from 5-phospho-alpha-D-ribose 1-diphosphate: step 9/9. Catalyzes the sequential NAD-dependent oxidations of L-histidinol to L-histidinaldehyde and then to L-histidine. This is Histidinol dehydrogenase (hisD) from Mycobacterium leprae (strain TN).